Reading from the N-terminus, the 549-residue chain is MAKDVKFGIDARKQMMDGVNVLANAVRVTLGPKGRNVVIDKSFGAPTITKDGVSVAKEIELENKFENMGAQLVREVASRTNDVAGDGTTTATVLAQSILQEGMKSVAAGMNPMDLKRGIDKAVRAAVEQIHLLSTPADDSKAIAQVGSISANSDTKIGELIAQAMEKVGKQGVITVEEGSSFEDTLEVVEGMQFDRGYISPYFANKQDSLTAEFENPYILLVDKKISNIREIVPLLEQVMQQSKPLLIIAEDVENEALATLVVNNMRGGLKTCAVKAPGFGDRRKAMLEDIATLTGGTVISEEIGLSLETATLEQLGTAKKVTVGKENTVIVDGAGNSADIENRVESIKRQVEESTSDYDKEKLQERMAKLAGGVAVIKVGAATETEMKEKKDRVDDALHATRAAVEEGVVPGGGVALVRAMNALSELRGDNDDQNAGINILRRAMEAPLRQIVTNSGEEASVVVNEVKSGTGNYGYNAASGEYGDMLEMGILDPAKVARSALENAASVAGLMLTTEVMITDLPQGDDGMAGMGGAGGMGGMGGMGGMM.

ATP contacts are provided by residues 29-32 (TLGP), Lys-50, 86-90 (DGTTT), Gly-414, 478-480 (NAA), and Asp-494.

Belongs to the chaperonin (HSP60) family. Forms a cylinder of 14 subunits composed of two heptameric rings stacked back-to-back. Interacts with the co-chaperonin GroES.

It is found in the cytoplasm. The catalysed reaction is ATP + H2O + a folded polypeptide = ADP + phosphate + an unfolded polypeptide.. In terms of biological role, together with its co-chaperonin GroES, plays an essential role in assisting protein folding. The GroEL-GroES system forms a nano-cage that allows encapsulation of the non-native substrate proteins and provides a physical environment optimized to promote and accelerate protein folding. The sequence is that of Chaperonin GroEL from Psychrobacter cryohalolentis (strain ATCC BAA-1226 / DSM 17306 / VKM B-2378 / K5).